The following is a 188-amino-acid chain: NAD(P)H-quinone oxidoreductase subunit 6, chloroplastic (188 aa).

Helical transmembrane passes span 10 to 30 (GILL…ILLN), 32 to 52 (IVQS…LYLV), 61 to 81 (AQVL…VMLI), 97 to 117 (GNNI…SIIL), and 153 to 173 (FLLP…GAIT).

This sequence belongs to the complex I subunit 6 family. In terms of assembly, NDH is composed of at least 16 different subunits, 5 of which are encoded in the nucleus.

The protein localises to the plastid. It localises to the chloroplast thylakoid membrane. The enzyme catalyses a plastoquinone + NADH + (n+1) H(+)(in) = a plastoquinol + NAD(+) + n H(+)(out). It catalyses the reaction a plastoquinone + NADPH + (n+1) H(+)(in) = a plastoquinol + NADP(+) + n H(+)(out). NDH shuttles electrons from NAD(P)H:plastoquinone, via FMN and iron-sulfur (Fe-S) centers, to quinones in the photosynthetic chain and possibly in a chloroplast respiratory chain. The immediate electron acceptor for the enzyme in this species is believed to be plastoquinone. Couples the redox reaction to proton translocation, and thus conserves the redox energy in a proton gradient. This is NAD(P)H-quinone oxidoreductase subunit 6, chloroplastic (ndhG) from Psilotum nudum (Whisk fern).